Consider the following 497-residue polypeptide: Aspartyl/glutamyl-tRNA(Asn/Gln) amidotransferase subunit B (497 aa).

This sequence belongs to the GatB/GatE family. GatB subfamily. As to quaternary structure, heterotrimer of A, B and C subunits.

The enzyme catalyses L-glutamyl-tRNA(Gln) + L-glutamine + ATP + H2O = L-glutaminyl-tRNA(Gln) + L-glutamate + ADP + phosphate + H(+). It carries out the reaction L-aspartyl-tRNA(Asn) + L-glutamine + ATP + H2O = L-asparaginyl-tRNA(Asn) + L-glutamate + ADP + phosphate + 2 H(+). In terms of biological role, allows the formation of correctly charged Asn-tRNA(Asn) or Gln-tRNA(Gln) through the transamidation of misacylated Asp-tRNA(Asn) or Glu-tRNA(Gln) in organisms which lack either or both of asparaginyl-tRNA or glutaminyl-tRNA synthetases. The reaction takes place in the presence of glutamine and ATP through an activated phospho-Asp-tRNA(Asn) or phospho-Glu-tRNA(Gln). This Rhodopirellula baltica (strain DSM 10527 / NCIMB 13988 / SH1) protein is Aspartyl/glutamyl-tRNA(Asn/Gln) amidotransferase subunit B.